Consider the following 1006-residue polypeptide: Unconventional myosin-Id (1006 aa).

N-acetylalanine is present on Ala-2. In terms of domain architecture, Myosin motor spans 9 to 695; it reads FGKADFVLMD…TLFTLEELRA (687 aa). ATP is bound at residue 102 to 109; that stretch reads GESGAGKT. At Ser-200 the chain carries Phosphoserine. Tyr-536 carries the post-translational modification Phosphotyrosine. The segment at 572-594 is actin-binding; that stretch reads MIALVDNLASKEPYYVRCIKPND. 2 IQ domains span residues 699–719 and 721–741; these read IRIV…MRYK and TKAA…SYIH. The 194-residue stretch at 812–1005 folds into the TH1 domain; the sequence is GQRADLGLQR…RSGFILSVPG (194 aa).

It belongs to the TRAFAC class myosin-kinesin ATPase superfamily. Myosin family. As to quaternary structure, interacts (via the two IQ motifs) with calmodulin. Binds an additional calmodulin chain via a third, C-terminal region. Interacts with F-actin. In terms of tissue distribution, expressed in many tissues. Highest levels in brain, followed by lung and ovary; expression is lowest in spleen.

The protein resides in the cytoplasm. It is found in the perikaryon. The protein localises to the cell projection. Its subcellular location is the dendrite. It localises to the early endosome. The protein resides in the cell cortex. In terms of biological role, unconventional myosin that functions as actin-based motor protein with ATPase activity. Plays a role in endosomal protein trafficking, and especially in the transfer of cargo proteins from early to recycling endosomes. Required for normal planar cell polarity in ciliated tracheal cells, for normal rotational polarity of cilia, and for coordinated, unidirectional ciliary movement in the trachea. Required for normal, polarized cilia organization in brain ependymal epithelial cells. This chain is Unconventional myosin-Id (MYO1D), found in Homo sapiens (Human).